The sequence spans 379 residues: Cytochrome b (379 aa).

The next 4 membrane-spanning stretches (helical) occupy residues 33 to 53 (LGSL…FLAM), 77 to 98 (WTIR…YLHI), 113 to 133 (WNTG…GYVL), and 178 to 198 (FFTL…THLL). Residues His-83 and His-97 each coordinate heme b. Heme b contacts are provided by His-182 and His-196. His-201 serves as a coordination point for a ubiquinone. A run of 4 helical transmembrane segments spans residues 226-246 (IKDI…TLLH), 288-308 (LGGV…PMTH), 320-340 (ISQC…WIGG), and 347-367 (FTTI…ILTP).

Belongs to the cytochrome b family. As to quaternary structure, the cytochrome bc1 complex contains 11 subunits: 3 respiratory subunits (MT-CYB, CYC1 and UQCRFS1), 2 core proteins (UQCRC1 and UQCRC2) and 6 low-molecular weight proteins (UQCRH/QCR6, UQCRB/QCR7, UQCRQ/QCR8, UQCR10/QCR9, UQCR11/QCR10 and a cleavage product of UQCRFS1). This cytochrome bc1 complex then forms a dimer. The cofactor is heme b.

The protein localises to the mitochondrion inner membrane. Its function is as follows. Component of the ubiquinol-cytochrome c reductase complex (complex III or cytochrome b-c1 complex) that is part of the mitochondrial respiratory chain. The b-c1 complex mediates electron transfer from ubiquinol to cytochrome c. Contributes to the generation of a proton gradient across the mitochondrial membrane that is then used for ATP synthesis. The protein is Cytochrome b (MT-CYB) of Bradypus tridactylus (Pale-throated three-toed sloth).